A 361-amino-acid chain; its full sequence is sn-glycerol-3-phosphate import ATP-binding protein UgpC (361 aa).

Residues 4–235 (LSLKGVRKSY…PATVFVAGFI (232 aa)) enclose the ABC transporter domain. 37 to 44 (GPSGCGKS) lines the ATP pocket.

Belongs to the ABC transporter superfamily. sn-glycerol-3-phosphate importer (TC 3.A.1.1.3) family. As to quaternary structure, the complex is composed of two ATP-binding proteins (UgpC), two transmembrane proteins (UgpA and UgpE) and a solute-binding protein (UgpB).

It is found in the cell inner membrane. It catalyses the reaction sn-glycerol 3-phosphate(out) + ATP + H2O = sn-glycerol 3-phosphate(in) + ADP + phosphate + H(+). In terms of biological role, part of the ABC transporter complex UgpBAEC involved in sn-glycerol-3-phosphate (G3P) import. Responsible for energy coupling to the transport system. This chain is sn-glycerol-3-phosphate import ATP-binding protein UgpC, found in Burkholderia cenocepacia (strain HI2424).